The chain runs to 901 residues: Protein translocase subunit SecA (901 aa).

Residues Gln-87, 105 to 109 (GEGKT), and Asp-512 contribute to the ATP site. A disordered region spans residues 859–901 (HQDDDSAAAAALAAQTGERKVGRNDPCPCGSGKKYKQCHGRLQ). Residues Cys-885, Cys-887, Cys-896, and His-897 each coordinate Zn(2+). Residues 891–901 (KKYKQCHGRLQ) are compositionally biased toward basic residues.

This sequence belongs to the SecA family. Monomer and homodimer. Part of the essential Sec protein translocation apparatus which comprises SecA, SecYEG and auxiliary proteins SecDF-YajC and YidC. Zn(2+) is required as a cofactor.

The protein localises to the cell inner membrane. It localises to the cytoplasm. It carries out the reaction ATP + H2O + cellular proteinSide 1 = ADP + phosphate + cellular proteinSide 2.. Its function is as follows. Part of the Sec protein translocase complex. Interacts with the SecYEG preprotein conducting channel. Has a central role in coupling the hydrolysis of ATP to the transfer of proteins into and across the cell membrane, serving both as a receptor for the preprotein-SecB complex and as an ATP-driven molecular motor driving the stepwise translocation of polypeptide chains across the membrane. The sequence is that of Protein translocase subunit SecA from Escherichia coli (strain 55989 / EAEC).